Consider the following 405-residue polypeptide: Tyrosine--tRNA ligase (405 aa).

Residues 48 to 57 (PTAPDLHLGH) carry the 'HIGH' region motif. Positions 232–236 (KMSKS) match the 'KMSKS' region motif. Lys-235 provides a ligand contact to ATP. One can recognise an S4 RNA-binding domain in the interval 343-404 (IWLPKLLADA…GKRRFVKVIF (62 aa)).

Belongs to the class-I aminoacyl-tRNA synthetase family. TyrS type 2 subfamily. In terms of assembly, homodimer.

Its subcellular location is the cytoplasm. The catalysed reaction is tRNA(Tyr) + L-tyrosine + ATP = L-tyrosyl-tRNA(Tyr) + AMP + diphosphate + H(+). Its function is as follows. Catalyzes the attachment of tyrosine to tRNA(Tyr) in a two-step reaction: tyrosine is first activated by ATP to form Tyr-AMP and then transferred to the acceptor end of tRNA(Tyr). The polypeptide is Tyrosine--tRNA ligase (Desulfotalea psychrophila (strain LSv54 / DSM 12343)).